A 355-amino-acid chain; its full sequence is Histidinol-phosphate aminotransferase (355 aa).

Lysine 211 bears the N6-(pyridoxal phosphate)lysine mark.

This sequence belongs to the class-II pyridoxal-phosphate-dependent aminotransferase family. Histidinol-phosphate aminotransferase subfamily. Homodimer. The cofactor is pyridoxal 5'-phosphate.

The enzyme catalyses L-histidinol phosphate + 2-oxoglutarate = 3-(imidazol-4-yl)-2-oxopropyl phosphate + L-glutamate. It participates in amino-acid biosynthesis; L-histidine biosynthesis; L-histidine from 5-phospho-alpha-D-ribose 1-diphosphate: step 7/9. In Aeromonas salmonicida (strain A449), this protein is Histidinol-phosphate aminotransferase.